We begin with the raw amino-acid sequence, 416 residues long: Alpha-1-antiproteinase (416 aa).

Positions 1–24 (MALSITRGLLLLAALCCLAPTSLA) are cleaved as a signal peptide. N-linked (GlcNAc...) asparagine glycans are attached at residues Asn68, Asn105, Asn143, and Asn269. The tract at residues 371–390 (GATFLEAIPMSLPPDVEFNR) is RCL. Ser381 is subject to Phosphoserine.

Belongs to the serpin family. As to quaternary structure, interacts with CELA2A. Interacts with ERGIC3 and LMAN1/ERGIC53. Interacts with PRSS1/Trypsin. Plasma.

It is found in the secreted. Inhibits human leukocyte elastase, pig pancreatic elastase and bovine trypsin on a 1:1 molar basis. This is Alpha-1-antiproteinase from Ovis aries (Sheep).